Reading from the N-terminus, the 259-residue chain is tRNA pseudouridine synthase A (259 aa).

Asp52 serves as the catalytic Nucleophile. Tyr110 provides a ligand contact to substrate.

Belongs to the tRNA pseudouridine synthase TruA family. As to quaternary structure, homodimer.

The enzyme catalyses uridine(38/39/40) in tRNA = pseudouridine(38/39/40) in tRNA. Formation of pseudouridine at positions 38, 39 and 40 in the anticodon stem and loop of transfer RNAs. The protein is tRNA pseudouridine synthase A of Coprothermobacter proteolyticus (strain ATCC 35245 / DSM 5265 / OCM 4 / BT).